The primary structure comprises 230 residues: Response regulator MprA (230 aa).

The region spanning 4–118 (RILVVDDDRA…ELLARMRALL (115 aa)) is the Response regulatory domain. Residue Asp-48 is modified to 4-aspartylphosphate. A DNA-binding region (ompR/PhoB-type) is located at residues 129 to 227 (SPALTFLDLT…VRGVGYVLRE (99 aa)).

In terms of processing, phosphorylated and dephosphorylated by MprB.

It localises to the cytoplasm. Member of the two-component regulatory system MprB/MprA which contributes to maintaining a balance among several systems involved in stress resistance and is required for establishment and maintenance of persistent infection in the host. Functions as a transcriptional regulator that recognizes a 19-bp nucleotide motif comprizing two loosely conserved 8-bp direct DNA-binding motif repeats separated by a 3-bp spacer region. The sequence is that of Response regulator MprA (mprA) from Mycobacterium sp. (strain JLS).